A 217-amino-acid chain; its full sequence is Putative 3-methyladenine DNA glycosylase (217 aa).

The RPE2 insert domain maps to 105–145 (SHNNVYTIDTAKIKSQITDEKTQSIIIRKNRRIMKFYIPNL).

It belongs to the DNA glycosylase MPG family.

In Rickettsia prowazekii (strain Madrid E), this protein is Putative 3-methyladenine DNA glycosylase.